The sequence spans 181 residues: Isopentenyl-diphosphate Delta-isomerase (181 aa).

The Mn(2+) site is built by His-24 and His-30. In terms of domain architecture, Nudix hydrolase spans 28-168 (LLHLAFSVLL…PDTFSVWFPT (141 aa)). Cys-68 is a catalytic residue. His-70 contacts Mn(2+). Position 88 (Glu-88) interacts with Mg(2+). Mn(2+)-binding residues include Glu-117 and Glu-119. Glu-119 is a catalytic residue.

The protein belongs to the IPP isomerase type 1 family. Requires Mg(2+) as cofactor. Mn(2+) serves as cofactor.

The protein localises to the cytoplasm. It catalyses the reaction isopentenyl diphosphate = dimethylallyl diphosphate. It participates in isoprenoid biosynthesis; dimethylallyl diphosphate biosynthesis; dimethylallyl diphosphate from isopentenyl diphosphate: step 1/1. Its function is as follows. Catalyzes the 1,3-allylic rearrangement of the homoallylic substrate isopentenyl (IPP) to its highly electrophilic allylic isomer, dimethylallyl diphosphate (DMAPP). The sequence is that of Isopentenyl-diphosphate Delta-isomerase from Aliivibrio fischeri (strain MJ11) (Vibrio fischeri).